The primary structure comprises 1025 residues: Serine/threonine-protein kinase TAO2 (1025 aa).

The region spanning 28 to 281 (FADLREIGHG…SDMLLKHRFL (254 aa)) is the Protein kinase domain. ATP-binding positions include 34–42 (IGHGSFGAV) and Lys57. The active-site Proton acceptor is the Asp151. The span at 349-373 (ESSQSVPSMSISASSQSSSVNSLAD) shows a compositional bias: low complexity. The disordered stretch occupies residues 349–377 (ESSQSVPSMSISASSQSSSVNSLADASDD). Coiled-coil stretches lie at residues 457–650 (SALR…ECAM) and 755–876 (ILKR…EIEA). Disordered stretches follow at residues 899 to 930 (FNQGYQAPPPGWPSRPVPRSGSHWSHGVQNTG) and 945 to 1025 (SASW…LSYS). The span at 905–914 (APPPGWPSRP) shows a compositional bias: pro residues. Low complexity predominate over residues 947–986 (SWGLHPPGSSSSLSALPSSSSSSSSSPSSSSGGRPGLLLL). Positions 1007 to 1025 (SRSTSVTSQLSNGSHLSYS) are enriched in polar residues.

This sequence belongs to the protein kinase superfamily. STE Ser/Thr protein kinase family. STE20 subfamily. Mg(2+) is required as a cofactor.

The catalysed reaction is L-seryl-[protein] + ATP = O-phospho-L-seryl-[protein] + ADP + H(+). It carries out the reaction L-threonyl-[protein] + ATP = O-phospho-L-threonyl-[protein] + ADP + H(+). In terms of biological role, serine/threonine-protein kinase involved in different processes such as apoptotic morphological changes, MAPK8/JNK and MAPK14/p38 MAPK signaling pathway. Functionally, activates the JNK MAP kinase pathway. The chain is Serine/threonine-protein kinase TAO2 (taok2) from Xenopus laevis (African clawed frog).